Consider the following 2380-residue polypeptide: Probable polyketide synthase 25 (2380 aa).

Positions 1 to 18 are enriched in polar residues; it reads MDNSYLNNPQFDINNGNK. The interval 1 to 29 is disordered; that stretch reads MDNSYLNNPQFDINNGNKEVTDDDNNKNN. The Ketosynthase family 3 (KS3) domain maps to 31-457; it reads DNLVAIVGVG…GSNCCLVLSQ (427 aa). Residues Cys198, His340, and His380 each act as for beta-ketoacyl synthase activity in the active site. The acyl/malonyl transferase stretch occupies residues 649 to 682; that stretch reads GIKASFMLGHSLGEVTTAYCSGMIDIDQLCYLIY. The For acyl/malonyl transferase activity role is filled by Ser659. Residues 948–1070 are N-terminal hotdog fold; sequence ISILGNSMQD…ANFQLYNNGK (123 aa). In terms of domain architecture, PKS/mFAS DH spans 948-1234; that stretch reads ISILGNSMQD…CTSLTPVKDP (287 aa). His982 functions as the Proton acceptor; for dehydratase activity in the catalytic mechanism. The C-terminal hotdog fold stretch occupies residues 1085–1234; that stretch reads NLSSIPWDKF…CTSLTPVKDP (150 aa). Residue Asp1148 is the Proton donor; for dehydratase activity of the active site. Residues 2299–2376 enclose the Carrier domain; sequence KNSTNIKDKF…MVCQIINDNF (78 aa). Ser2336 carries the O-(pantetheine 4'-phosphoryl)serine modification.

Requires pantetheine 4'-phosphate as cofactor.

In terms of biological role, probable polyketide synthase. This Dictyostelium discoideum (Social amoeba) protein is Probable polyketide synthase 25 (pks25).